The chain runs to 195 residues: Transcription factor LBX2 (195 aa).

2 disordered regions span residues 1-89 and 164-195; these read MNSV…KSRT and PALP…QVDD. Residues 84 to 143 constitute a DNA-binding region (homeobox); sequence RRKSRTAFTAQQVLELERRFVFQKYLAPSERDGLAARLGLANAQVVTWFQNRRAKLKRDV. A compositionally biased stretch (acidic residues) spans 186 to 195; it reads LSDEEIQVDD.

Expressed in the developing urogenital system, eye and brain.

It is found in the nucleus. Functionally, transcription factor. The sequence is that of Transcription factor LBX2 (Lbx2) from Mus musculus (Mouse).